Consider the following 87-residue polypeptide: Large ribosomal subunit protein bL31B (87 aa).

Belongs to the bacterial ribosomal protein bL31 family. Type B subfamily. As to quaternary structure, part of the 50S ribosomal subunit.

This is Large ribosomal subunit protein bL31B from Pseudomonas aeruginosa (strain LESB58).